Consider the following 819-residue polypeptide: DNA topoisomerase 4 subunit A (819 aa).

Positions 30-496 (LPDIRDGLKP…QIIEIDTASL (467 aa)) constitute a Topo IIA-type catalytic domain. Y118 serves as the catalytic O-(5'-phospho-DNA)-tyrosine intermediate.

The protein belongs to the type II topoisomerase GyrA/ParC subunit family. ParC type 2 subfamily. As to quaternary structure, heterotetramer composed of ParC and ParE.

The protein resides in the cell membrane. It catalyses the reaction ATP-dependent breakage, passage and rejoining of double-stranded DNA.. Topoisomerase IV is essential for chromosome segregation. It relaxes supercoiled DNA. Performs the decatenation events required during the replication of a circular DNA molecule. This is DNA topoisomerase 4 subunit A from Streptococcus pyogenes serotype M3 (strain ATCC BAA-595 / MGAS315).